Consider the following 681-residue polypeptide: Ribosomal L1 domain-containing protein CG13096 (681 aa).

Disordered stretches follow at residues 1 to 248 and 579 to 681; these read MVKV…AKSK and DAAP…DDEE. Ser-15 and Ser-17 each carry phosphoserine. A compositionally biased stretch (basic and acidic residues) spans 54-74; the sequence is VKKDAIKKEPEVSKKGAEKKQ. Residue Ser-89 is modified to Phosphoserine. Residues 103–112 show a composition bias toward low complexity; it reads KPAASGAPVG. Ser-128 is subject to Phosphoserine. Residues 189 to 217 show a composition bias toward low complexity; it reads QAAPAKPAKAQPASQLQKKAKAVQKLSKP. Residues 599–610 show a composition bias toward basic and acidic residues; sequence KESSSEGAKADA. The span at 611–681 shows a compositional bias: acidic residues; it reads ESDEEEEVEE…EDDDDDDDEE (71 aa).

The protein belongs to the universal ribosomal protein uL1 family. Highly divergent.

The protein is Ribosomal L1 domain-containing protein CG13096 of Drosophila melanogaster (Fruit fly).